Reading from the N-terminus, the 476-residue chain is Methylenetetrahydrofolate--tRNA-(uracil-5-)-methyltransferase TrmFO (476 aa).

FAD is bound at residue 14–19; that stretch reads GGGLAG.

Belongs to the MnmG family. TrmFO subfamily. The cofactor is FAD.

The protein localises to the cytoplasm. It catalyses the reaction uridine(54) in tRNA + (6R)-5,10-methylene-5,6,7,8-tetrahydrofolate + NADH + H(+) = 5-methyluridine(54) in tRNA + (6S)-5,6,7,8-tetrahydrofolate + NAD(+). The enzyme catalyses uridine(54) in tRNA + (6R)-5,10-methylene-5,6,7,8-tetrahydrofolate + NADPH + H(+) = 5-methyluridine(54) in tRNA + (6S)-5,6,7,8-tetrahydrofolate + NADP(+). Its function is as follows. Catalyzes the folate-dependent formation of 5-methyl-uridine at position 54 (M-5-U54) in all tRNAs. The chain is Methylenetetrahydrofolate--tRNA-(uracil-5-)-methyltransferase TrmFO from Brucella anthropi (strain ATCC 49188 / DSM 6882 / CCUG 24695 / JCM 21032 / LMG 3331 / NBRC 15819 / NCTC 12168 / Alc 37) (Ochrobactrum anthropi).